The primary structure comprises 349 residues: GTPase Obg (349 aa).

An Obg domain is found at 1 to 159 (MKFLDQAKVY…LWIWLRLKLI (159 aa)). The region spanning 160–327 (ADAGLIGLPN…VLRALMRVVQ (168 aa)) is the OBG-type G domain. GTP contacts are provided by residues 166-173 (GLPNAGKS), 191-195 (FTTLH), 212-215 (DIPG), 279-282 (SQID), and 308-310 (SSA). Residues Ser173 and Thr193 each coordinate Mg(2+).

It belongs to the TRAFAC class OBG-HflX-like GTPase superfamily. OBG GTPase family. In terms of assembly, monomer. It depends on Mg(2+) as a cofactor.

Its subcellular location is the cytoplasm. Its function is as follows. An essential GTPase which binds GTP, GDP and possibly (p)ppGpp with moderate affinity, with high nucleotide exchange rates and a fairly low GTP hydrolysis rate. Plays a role in control of the cell cycle, stress response, ribosome biogenesis and in those bacteria that undergo differentiation, in morphogenesis control. The polypeptide is GTPase Obg (Chelativorans sp. (strain BNC1)).